Here is a 560-residue protein sequence, read N- to C-terminus: Formate--tetrahydrofolate ligase (560 aa).

70-77 (TPAGEGKT) is a binding site for ATP.

It belongs to the formate--tetrahydrofolate ligase family.

The catalysed reaction is (6S)-5,6,7,8-tetrahydrofolate + formate + ATP = (6R)-10-formyltetrahydrofolate + ADP + phosphate. Its pathway is one-carbon metabolism; tetrahydrofolate interconversion. The sequence is that of Formate--tetrahydrofolate ligase from Methanocorpusculum labreanum (strain ATCC 43576 / DSM 4855 / Z).